Here is a 207-residue protein sequence, read N- to C-terminus: Ras-related protein Rab-7a (207 aa).

The residue at position 2 (threonine 2) is an N-acetylthreonine. Positions 17, 18, 19, 20, 21, 22, 23, 34, 35, 37, and 40 each coordinate GTP. Threonine 22 serves as a coordination point for Mg(2+). Positions 28 to 41 (YVNKKFSNQYKATI) match the Switch 1 motif. Residues threonine 40 and aspartate 63 each contribute to the Mg(2+) site. Position 66 (glycine 66) interacts with GTP. The Switch 2 motif lies at 67–82 (QERFQSLGVAFYRGAD). Phosphoserine is present on serine 72. GTP is bound by residues asparagine 125, lysine 126, aspartate 128, alanine 156, and lysine 157. Residues lysine 191 and lysine 194 each participate in a glycyl lysine isopeptide (Lys-Gly) (interchain with G-Cter in ubiquitin) cross-link. S-geranylgeranyl cysteine attachment occurs at residues cysteine 205 and cysteine 207. Cysteine 207 carries the cysteine methyl ester modification.

The protein belongs to the small GTPase superfamily. Rab family. Interacts with NTRK1/TRKA, RILP, PSMA7, RNF115 and FYCO1. Interacts with the PIK3C3/VPS34-PIK3R4 complex. The GTP-bound form interacts with OSBPL1A and RAC1. Interacts with CLN3. Interacts with CHM, the substrate-binding subunit of the Rab geranylgeranyltransferase complex. Interacts with C9orf72. Does not interact with HPS4 and the BLOC-3 complex (heterodimer of HPS1 and HPS4). Interacts with CLN5. Interacts with PLEKHM1 (via N- and C-terminus). Interacts with PRPH; the interaction is direct. Interacts with VPS13A. The GDP-bound form interacts with RIMOC1. Interacts with the MON1A-CCZ1B complex and this interaction is enhanced in the presence of RIMOC1. Interacts with VPS39 and VPS41. Forms a ternary complex with LAMP2 and RUFY4; the interaction with LAMP2 is mediated by RUFY4 (via RUN and coiled coil domains). The cofactor is Mg(2+). Post-translationally, deubiquitination at Lys-191 and Lys-194 by USP32. In terms of processing, phosphorylated at Ser-72 by LRRK1; phosphorylation is dependent on protein kinase C (PKC) activation of LRRK1. Prenylated. Prenylation is required for association with cellular membranes. Widely expressed. High expression in liver, heart and kidney. Found in sensory and motor neurons.

Its subcellular location is the cytoplasmic vesicle. The protein localises to the phagosome membrane. It is found in the late endosome membrane. It localises to the lysosome membrane. The protein resides in the melanosome membrane. Its subcellular location is the autophagosome membrane. The protein localises to the lipid droplet. It is found in the endosome membrane. It localises to the mitochondrion membrane. The enzyme catalyses GTP + H2O = GDP + phosphate + H(+). Regulated by guanine nucleotide exchange factors (GEFs) which promote the exchange of bound GDP for free GTP. Regulated by GTPase activating proteins (GAPs) which increase the GTP hydrolysis activity. Inhibited by GDP dissociation inhibitors (GDIs). The small GTPases Rab are key regulators of intracellular membrane trafficking, from the formation of transport vesicles to their fusion with membranes. Rabs cycle between an inactive GDP-bound form and an active GTP-bound form that is able to recruit to membranes different sets of downstream effectors directly responsible for vesicle formation, movement, tethering and fusion. In its active state, RAB7A binds to a variety of effector proteins playing a key role in the regulation of endo-lysosomal trafficking. Governs early-to-late endosomal maturation, microtubule minus-end as well as plus-end directed endosomal migration and positioning, and endosome-lysosome transport through different protein-protein interaction cascades. Also plays a central role in growth-factor-mediated cell signaling, nutrient-transporter-mediated nutrient uptake, neurotrophin transport in the axons of neurons and lipid metabolism. Also involved in regulation of some specialized endosomal membrane trafficking, such as maturation of melanosomes, pathogen-induced phagosomes (or vacuoles) and autophagosomes. Plays a role in the maturation and acidification of phagosomes that engulf pathogens, such as S.aureus and Mycobacteria. Plays a role in the fusion of phagosomes with lysosomes. In concert with RAC1, plays a role in regulating the formation of RBs (ruffled borders) in osteoclasts. Controls the endosomal trafficking and neurite outgrowth signaling of NTRK1/TRKA. Regulates the endocytic trafficking of the EGF-EGFR complex by regulating its lysosomal degradation. Involved in the ADRB2-stimulated lipolysis through lipophagy, a cytosolic lipase-independent autophagic pathway. Required for the exosomal release of SDCBP, CD63 and syndecan. Required for vesicular trafficking and cell surface expression of ACE2. May play a role in PRPH neuronal intermediate filament assembly. This is Ras-related protein Rab-7a from Mus musculus (Mouse).